The primary structure comprises 265 residues: Phosphatidylglycerol--prolipoprotein diacylglyceryl transferase (265 aa).

The next 7 membrane-spanning stretches (helical) occupy residues 11–31, 56–76, 91–111, 120–140, 173–193, 198–218, and 233–253; these read AVSI…FGFI, MVTW…ILFY, IWHG…AVWL, FLSV…FGRI, QLYE…WFSG, VGAV…AVEF, and WLTM…WLLL. A 1,2-diacyl-sn-glycero-3-phospho-(1'-sn-glycerol) is bound at residue Arg139.

The protein belongs to the Lgt family.

The protein localises to the cell inner membrane. The enzyme catalyses L-cysteinyl-[prolipoprotein] + a 1,2-diacyl-sn-glycero-3-phospho-(1'-sn-glycerol) = an S-1,2-diacyl-sn-glyceryl-L-cysteinyl-[prolipoprotein] + sn-glycerol 1-phosphate + H(+). It functions in the pathway protein modification; lipoprotein biosynthesis (diacylglyceryl transfer). Its function is as follows. Catalyzes the transfer of the diacylglyceryl group from phosphatidylglycerol to the sulfhydryl group of the N-terminal cysteine of a prolipoprotein, the first step in the formation of mature lipoproteins. The sequence is that of Phosphatidylglycerol--prolipoprotein diacylglyceryl transferase from Nitratidesulfovibrio vulgaris (strain DSM 19637 / Miyazaki F) (Desulfovibrio vulgaris).